The chain runs to 315 residues: Cytochrome c biogenesis protein CcsA (315 aa).

The next 7 helical transmembrane spans lie at 14-34, 72-92, 101-121, 146-166, 221-241, 255-272, and 282-302; these read VVSLGLAAFLFLLIALPISFW, ISNLYESLCFLTWGCTLAQLF, IVSAVATPVSLLSIGFASFVL, VIMCSYAALLIGSILSFGVFL, SITAGFLLLTVGLISGAVWAN, TWALICWLVYAAYLHTRL, and AILAIAGFFVIIVCYIGVNLL.

It belongs to the CcmF/CycK/Ccl1/NrfE/CcsA family. In terms of assembly, may interact with ccs1.

The protein resides in the cellular thylakoid membrane. Its function is as follows. Required during biogenesis of c-type cytochromes (cytochrome c6 and cytochrome f) at the step of heme attachment. The polypeptide is Cytochrome c biogenesis protein CcsA (Prochlorococcus marinus (strain NATL1A)).